We begin with the raw amino-acid sequence, 418 residues long: Glucose-1-phosphate adenylyltransferase (418 aa).

Alpha-D-glucose 1-phosphate is bound by residues Y107, G172, 187–188 (EK), and S205.

This sequence belongs to the bacterial/plant glucose-1-phosphate adenylyltransferase family. In terms of assembly, homotetramer.

It carries out the reaction alpha-D-glucose 1-phosphate + ATP + H(+) = ADP-alpha-D-glucose + diphosphate. It functions in the pathway glycan biosynthesis; glycogen biosynthesis. In terms of biological role, involved in the biosynthesis of ADP-glucose, a building block required for the elongation reactions to produce glycogen. Catalyzes the reaction between ATP and alpha-D-glucose 1-phosphate (G1P) to produce pyrophosphate and ADP-Glc. This Gemmatimonas aurantiaca (strain DSM 14586 / JCM 11422 / NBRC 100505 / T-27) protein is Glucose-1-phosphate adenylyltransferase.